Reading from the N-terminus, the 329-residue chain is BRISC and BRCA1-A complex member 1 (329 aa).

Methionine 1 bears the N-acetylmethionine mark. Positions 1-84 (MEVAEPSSPT…VPPPAPEVQI (84 aa)) are disordered. Serine 8 bears the Phosphoserine mark. Acidic residues predominate over residues 10-19 (TEEEEEEEEH). Residues serine 29, serine 49, serine 57, and serine 62 each carry the phosphoserine modification. Threonine 65 carries the post-translational modification Phosphothreonine. Residue serine 66 is modified to Phosphoserine. The VWFA-like stretch occupies residues 95–298 (VIICLDLSEE…LELHNCMAKL (204 aa)).

The protein belongs to the BABAM1 family. As to quaternary structure, component of the ARISC complex, at least composed of UIMC1/RAP80, ABRAXAS1, BRCC3/BRCC36, BABAM2 and BABAM1/NBA1. Component of the BRCA1-A complex, at least composed of BRCA1, BARD1, UIMC1/RAP80, ABRAXAS1, BRCC3/BRCC36, BABAM2 and BABAM1/NBA1. In the BRCA1-A complex, interacts directly with ABRAXAS1 and BABAM2. Component of the BRISC complex, at least composed of ABRAXAS2, BRCC3/BRCC36, BABAM2 and BABAM1/NBA1. Identified in a complex with SHMT2 and the other subunits of the BRISC complex.

It is found in the cytoplasm. The protein resides in the nucleus. Its function is as follows. Component of the BRCA1-A complex, a complex that specifically recognizes 'Lys-63'-linked ubiquitinated histones H2A and H2AX at DNA lesions sites, leading to target the BRCA1-BARD1 heterodimer to sites of DNA damage at double-strand breaks (DSBs). The BRCA1-A complex also possesses deubiquitinase activity that specifically removes 'Lys-63'-linked ubiquitin on histones H2A and H2AX. In the BRCA1-A complex, it is required for the complex integrity and its localization at DSBs. Component of the BRISC complex, a multiprotein complex that specifically cleaves 'Lys-63'-linked ubiquitin in various substrates. In these 2 complexes, it is probably required to maintain the stability of BABAM2 and help the 'Lys-63'-linked deubiquitinase activity mediated by BRCC3/BRCC36 component. The BRISC complex is required for normal mitotic spindle assembly and microtubule attachment to kinetochores via its role in deubiquitinating NUMA1. Plays a role in interferon signaling via its role in the deubiquitination of the interferon receptor IFNAR1; deubiquitination increases IFNAR1 activity by enhancing its stability and cell surface expression. Down-regulates the response to bacterial lipopolysaccharide (LPS) via its role in IFNAR1 deubiquitination. The polypeptide is BRISC and BRCA1-A complex member 1 (BABAM1) (Homo sapiens (Human)).